A 428-amino-acid polypeptide reads, in one-letter code: Trigger factor (428 aa).

The region spanning Ala-165–Pro-240 is the PPIase FKBP-type domain.

It belongs to the FKBP-type PPIase family. Tig subfamily.

The protein resides in the cytoplasm. The enzyme catalyses [protein]-peptidylproline (omega=180) = [protein]-peptidylproline (omega=0). Functionally, involved in protein export. Acts as a chaperone by maintaining the newly synthesized protein in an open conformation. Functions as a peptidyl-prolyl cis-trans isomerase. This is Trigger factor from Prosthecochloris aestuarii (strain DSM 271 / SK 413).